The chain runs to 481 residues: Aspartyl/glutamyl-tRNA(Asn/Gln) amidotransferase subunit B (481 aa).

Belongs to the GatB/GatE family. GatB subfamily. Heterotrimer of A, B and C subunits.

It catalyses the reaction L-glutamyl-tRNA(Gln) + L-glutamine + ATP + H2O = L-glutaminyl-tRNA(Gln) + L-glutamate + ADP + phosphate + H(+). The catalysed reaction is L-aspartyl-tRNA(Asn) + L-glutamine + ATP + H2O = L-asparaginyl-tRNA(Asn) + L-glutamate + ADP + phosphate + 2 H(+). Allows the formation of correctly charged Asn-tRNA(Asn) or Gln-tRNA(Gln) through the transamidation of misacylated Asp-tRNA(Asn) or Glu-tRNA(Gln) in organisms which lack either or both of asparaginyl-tRNA or glutaminyl-tRNA synthetases. The reaction takes place in the presence of glutamine and ATP through an activated phospho-Asp-tRNA(Asn) or phospho-Glu-tRNA(Gln). This chain is Aspartyl/glutamyl-tRNA(Asn/Gln) amidotransferase subunit B, found in Pseudomonas entomophila (strain L48).